The primary structure comprises 420 residues: Tyrosine--tRNA ligase 2 (420 aa).

Tyrosine 36 serves as a coordination point for L-tyrosine. The 'HIGH' region signature appears at proline 41–histidine 50. Residues tyrosine 171 and glutamine 175 each contribute to the L-tyrosine site. The short motif at lysine 231 to threonine 235 is the 'KMSKS' region element. Lysine 234 provides a ligand contact to ATP. The 67-residue stretch at leucine 354 to tyrosine 420 folds into the S4 RNA-binding domain.

Belongs to the class-I aminoacyl-tRNA synthetase family. TyrS type 1 subfamily. In terms of assembly, homodimer.

It localises to the cytoplasm. The enzyme catalyses tRNA(Tyr) + L-tyrosine + ATP = L-tyrosyl-tRNA(Tyr) + AMP + diphosphate + H(+). In terms of biological role, catalyzes the attachment of tyrosine to tRNA(Tyr) in a two-step reaction: tyrosine is first activated by ATP to form Tyr-AMP and then transferred to the acceptor end of tRNA(Tyr). The polypeptide is Tyrosine--tRNA ligase 2 (Enterococcus faecalis (strain ATCC 700802 / V583)).